The primary structure comprises 127 residues: MNKLLLVAAGGAVGSVARYLVGVGAMRVMGPGWPYGTFTVNVVGGFLMGCLASWLAHRGNTSSETWRVMLGVGVLGGFTTFSSFSLETALMIQKRAYGQAFTYSAASVLLAIAALFAGLLVARKVFA.

The next 4 membrane-spanning stretches (helical) occupy residues leucine 4–glycine 24, glycine 36–alanine 56, valine 72–isoleucine 92, and phenylalanine 101–valine 121. Na(+) contacts are provided by glycine 76 and threonine 79.

It belongs to the fluoride channel Fluc/FEX (TC 1.A.43) family.

The protein localises to the cell inner membrane. The enzyme catalyses fluoride(in) = fluoride(out). Na(+) is not transported, but it plays an essential structural role and its presence is essential for fluoride channel function. Functionally, fluoride-specific ion channel. Important for reducing fluoride concentration in the cell, thus reducing its toxicity. The chain is Fluoride-specific ion channel FluC from Caulobacter vibrioides (strain ATCC 19089 / CIP 103742 / CB 15) (Caulobacter crescentus).